The following is a 160-amino-acid chain: Cytochrome b6-f complex subunit 4 (160 aa).

The next 3 membrane-spanning stretches (helical) occupy residues 36 to 56, 95 to 115, and 127 to 147; these read LLYT…GLAL, LLGV…PFIE, and PIAT…GIGA.

It belongs to the cytochrome b family. PetD subfamily. The 4 large subunits of the cytochrome b6-f complex are cytochrome b6, subunit IV (17 kDa polypeptide, petD), cytochrome f and the Rieske protein, while the 4 small subunits are petG, petL, petM and petN. The complex functions as a dimer.

It localises to the plastid. Its subcellular location is the chloroplast thylakoid membrane. In terms of biological role, component of the cytochrome b6-f complex, which mediates electron transfer between photosystem II (PSII) and photosystem I (PSI), cyclic electron flow around PSI, and state transitions. The polypeptide is Cytochrome b6-f complex subunit 4 (Cyanidioschyzon merolae (strain NIES-3377 / 10D) (Unicellular red alga)).